The following is a 154-amino-acid chain: Prefoldin subunit alpha (154 aa).

Residues 123 to 154 form a disordered region; sequence EAEQLEQQAQQAQQQMMQQQMQAQQQPQDGEQ. Over residues 127–154 the composition is skewed to low complexity; the sequence is LEQQAQQAQQQMMQQQMQAQQQPQDGEQ.

This sequence belongs to the prefoldin alpha subunit family. Heterohexamer of two alpha and four beta subunits.

It is found in the cytoplasm. In terms of biological role, molecular chaperone capable of stabilizing a range of proteins. Seems to fulfill an ATP-independent, HSP70-like function in archaeal de novo protein folding. This chain is Prefoldin subunit alpha, found in Halobacterium salinarum (strain ATCC 29341 / DSM 671 / R1).